The primary structure comprises 143 residues: Hemoglobin cathodic subunit alpha (143 aa).

An N-acetylserine modification is found at serine 2. Residues 2–143 (SLTAKDKTLV…VSAALADKYR (142 aa)) form the Globin domain. Histidine 59 is a binding site for O2. Histidine 89 is a binding site for heme b.

Belongs to the globin family. As to quaternary structure, heterotetramer of two alpha chains and two beta chains. Red blood cells.

In terms of biological role, involved in oxygen transport from the gills to the various peripheral tissues. This Conger conger (Conger eel) protein is Hemoglobin cathodic subunit alpha.